Reading from the N-terminus, the 356-residue chain is DNA polymerase IV (356 aa).

The 181-residue stretch at 7-187 (IIHVDMDAFY…LPVNRVPGVG (181 aa)) folds into the UmuC domain. Mg(2+)-binding residues include Asp-11 and Asp-105. Glu-106 is an active-site residue.

Belongs to the DNA polymerase type-Y family. Monomer. Requires Mg(2+) as cofactor.

It is found in the cytoplasm. The catalysed reaction is DNA(n) + a 2'-deoxyribonucleoside 5'-triphosphate = DNA(n+1) + diphosphate. Poorly processive, error-prone DNA polymerase involved in untargeted mutagenesis. Copies undamaged DNA at stalled replication forks, which arise in vivo from mismatched or misaligned primer ends. These misaligned primers can be extended by PolIV. Exhibits no 3'-5' exonuclease (proofreading) activity. May be involved in translesional synthesis, in conjunction with the beta clamp from PolIII. The chain is DNA polymerase IV from Stenotrophomonas maltophilia (strain R551-3).